The sequence spans 222 residues: Phosphoglycolate phosphatase (222 aa).

Aspartate 12 acts as the Nucleophile in catalysis. The Mg(2+) site is built by aspartate 12, aspartate 14, and aspartate 175.

This sequence belongs to the HAD-like hydrolase superfamily. CbbY/CbbZ/Gph/YieH family. Mg(2+) is required as a cofactor.

The enzyme catalyses 2-phosphoglycolate + H2O = glycolate + phosphate. It participates in organic acid metabolism; glycolate biosynthesis; glycolate from 2-phosphoglycolate: step 1/1. Specifically catalyzes the dephosphorylation of 2-phosphoglycolate. Is involved in the dissimilation of the intracellular 2-phosphoglycolate formed during the DNA repair of 3'-phosphoglycolate ends, a major class of DNA lesions induced by oxidative stress. The protein is Phosphoglycolate phosphatase of Chromobacterium violaceum (strain ATCC 12472 / DSM 30191 / JCM 1249 / CCUG 213 / NBRC 12614 / NCIMB 9131 / NCTC 9757 / MK).